We begin with the raw amino-acid sequence, 210 residues long: Superoxide dismutase [Mn], mitochondrial (210 aa).

Mn(2+) contacts are provided by His-29, His-77, Asp-163, and His-167.

It belongs to the iron/manganese superoxide dismutase family. In terms of assembly, homotetramer. Requires Mn(2+) as cofactor.

Its subcellular location is the mitochondrion matrix. The enzyme catalyses 2 superoxide + 2 H(+) = H2O2 + O2. Its function is as follows. Destroys superoxide anion radicals which are normally produced within the cells and which are toxic to biological systems. The protein is Superoxide dismutase [Mn], mitochondrial (sodB) of Aspergillus fumigatus (strain ATCC MYA-4609 / CBS 101355 / FGSC A1100 / Af293) (Neosartorya fumigata).